Here is a 140-residue protein sequence, read N- to C-terminus: ATP synthase epsilon chain (140 aa).

This sequence belongs to the ATPase epsilon chain family. In terms of assembly, F-type ATPases have 2 components, CF(1) - the catalytic core - and CF(0) - the membrane proton channel. CF(1) has five subunits: alpha(3), beta(3), gamma(1), delta(1), epsilon(1). CF(0) has three main subunits: a, b and c.

The protein resides in the cell inner membrane. Functionally, produces ATP from ADP in the presence of a proton gradient across the membrane. This is ATP synthase epsilon chain from Alkalilimnicola ehrlichii (strain ATCC BAA-1101 / DSM 17681 / MLHE-1).